Reading from the N-terminus, the 482-residue chain is 7-deoxyloganetic acid glucosyltransferase (482 aa).

Residue H22 is the Proton acceptor of the active site. Residue H22 coordinates an anthocyanidin. D127 (charge relay) is an active-site residue. UDP-alpha-D-glucose contacts are provided by T149, A362, Q364, H379, W382, N383, S384, and E387. An anthocyanidin is bound at residue A402. Residues D403 and Q404 each contribute to the UDP-alpha-D-glucose site.

Belongs to the UDP-glycosyltransferase family. In terms of tissue distribution, expressed in leaves, roots and stems. Lower levels of expression in flowers. Preferentially expressed in internal phloem parenchyma cells.

It carries out the reaction 7-deoxyloganetate + UDP-alpha-D-glucose = 7-deoxyloganate + UDP + H(+). Iridoid glucosyltransferase acting exclusively on 7-deoxyloganetic acid. No activity with 7-deoxyloganetin. Catalyzes the fourth to last step in secologanin biosynthesis. The chain is 7-deoxyloganetic acid glucosyltransferase (UGT709C2) from Catharanthus roseus (Madagascar periwinkle).